Reading from the N-terminus, the 157-residue chain is Class 10 plant pathogenesis-related protein 2E (157 aa).

D8 serves as a coordination point for trans-zeatin. Ca(2+) is bound by residues P32, V35, and I38. E60, H69, Y81, and Y83 together coordinate trans-zeatin.

This sequence belongs to the BetVI family.

It localises to the cytoplasm. It is found in the cytosol. Its function is as follows. Class II ribonuclease (RNase). Binds to cytokinins. Interacts with melatonin. This is Class 10 plant pathogenesis-related protein 2E from Lupinus luteus (European yellow lupine).